The sequence spans 383 residues: MSTHLFTSESVSEGHPDKIADQISDAVLDEILKQDPKARVACETYVKTGMALVGGEITTSAWVDIENLTRQVICDIGYKHSDMGFDGHSCAVLNAIGKQSQDINQGVDRENPLDQGAGDQGIMFGYATNETEVFMPAPITYAHRLMERQAKVRKDGTLDWLRPDAKSQLTFKYEDNKIVGIDAVVLSTQHAESVSQKEVHEGVMEEIIKPVLPAKWLDKDTKYFINPTGRFVIGGPMGDCGLTGRKIIVDTYGGAARHGGGAFSGKDPSKVDRSAAYAARYVAKNIVAAGLADRCEIQLSYAIGVAEPTSIMLETFGTGKVANELLVKLVREFFDLRPYGLIQMLDLIRPIYRETAAYGHFGREQFPWEKIDRAAELSAAAGL.

Histidine 15 serves as a coordination point for ATP. Position 17 (aspartate 17) interacts with Mg(2+). Residue glutamate 43 participates in K(+) binding. L-methionine contacts are provided by glutamate 56 and glutamine 99. The flexible loop stretch occupies residues 99–109 (QSQDINQGVDR). Residues 164–166 (DAK), 230–231 (RF), aspartate 239, 245–246 (RK), alanine 262, and lysine 266 each bind ATP. Residue aspartate 239 coordinates L-methionine. Lysine 270 provides a ligand contact to L-methionine.

It belongs to the AdoMet synthase family. Homotetramer; dimer of dimers. Requires Mg(2+) as cofactor. It depends on K(+) as a cofactor.

The protein resides in the cytoplasm. It catalyses the reaction L-methionine + ATP + H2O = S-adenosyl-L-methionine + phosphate + diphosphate. Its pathway is amino-acid biosynthesis; S-adenosyl-L-methionine biosynthesis; S-adenosyl-L-methionine from L-methionine: step 1/1. Catalyzes the formation of S-adenosylmethionine (AdoMet) from methionine and ATP. The overall synthetic reaction is composed of two sequential steps, AdoMet formation and the subsequent tripolyphosphate hydrolysis which occurs prior to release of AdoMet from the enzyme. This is S-adenosylmethionine synthase from Actinobacillus succinogenes (strain ATCC 55618 / DSM 22257 / CCUG 43843 / 130Z).